Here is a 668-residue protein sequence, read N- to C-terminus: DNA ligase (668 aa).

Residues 32-36 (DVEYD), 81-82 (SL), and glutamate 111 contribute to the NAD(+) site. The N6-AMP-lysine intermediate role is filled by lysine 113. Positions 134, 171, 290, and 314 each coordinate NAD(+). Zn(2+)-binding residues include cysteine 408, cysteine 411, cysteine 426, and cysteine 432. In terms of domain architecture, BRCT spans 591–668 (EEDLSLKGQT…DEEALIAILS (78 aa)).

It belongs to the NAD-dependent DNA ligase family. LigA subfamily. Mg(2+) serves as cofactor. It depends on Mn(2+) as a cofactor.

It carries out the reaction NAD(+) + (deoxyribonucleotide)n-3'-hydroxyl + 5'-phospho-(deoxyribonucleotide)m = (deoxyribonucleotide)n+m + AMP + beta-nicotinamide D-nucleotide.. In terms of biological role, DNA ligase that catalyzes the formation of phosphodiester linkages between 5'-phosphoryl and 3'-hydroxyl groups in double-stranded DNA using NAD as a coenzyme and as the energy source for the reaction. It is essential for DNA replication and repair of damaged DNA. This Shewanella piezotolerans (strain WP3 / JCM 13877) protein is DNA ligase.